Reading from the N-terminus, the 454-residue chain is Response regulator PleD (454 aa).

Response regulatory domains lie at 4-120 (RILV…RSLT) and 155-269 (RVLI…KTQI). Mg(2+) is bound by residues D9, D10, D53, and M55. D53 is subject to 4-aspartylphosphate. Positions 319–454 (DPVSALLIDI…GRNAVVGKAA (136 aa)) constitute a GGDEF domain. Residues N335 and D344 each contribute to the substrate site. The active-site Proton acceptor is the E370.

In terms of assembly, homodimer. Inactive monomer in solution. Phosphorylated by PleC and DivJ. Phosphorylation stimulates cyclase activity.

It localises to the cytoplasm. The catalysed reaction is 2 GTP = 3',3'-c-di-GMP + 2 diphosphate. It functions in the pathway purine metabolism; 3',5'-cyclic di-GMP biosynthesis. With respect to regulation, allosterically inhibited by the product c-di-GMP. In terms of biological role, response regulator that is part of a signal transduction pathway controlling cell differentiation in the swarmer-to-stalked cell transition. Functionally, catalyzes the condensation of two GTP molecules to the cyclic dinucleotide di-GMP (c-di-GMP), which acts as a secondary messenger. In Caulobacter vibrioides (strain ATCC 19089 / CIP 103742 / CB 15) (Caulobacter crescentus), this protein is Response regulator PleD (pleD).